The chain runs to 145 residues: Large-conductance mechanosensitive channel (145 aa).

Transmembrane regions (helical) follow at residues 10–30 (FALK…GAFA), 41–61 (IMPI…MFLI), and 87–107 (GNFI…FMMV).

Belongs to the MscL family. Homopentamer.

The protein resides in the cell inner membrane. In terms of biological role, channel that opens in response to stretch forces in the membrane lipid bilayer. May participate in the regulation of osmotic pressure changes within the cell. This is Large-conductance mechanosensitive channel from Psychrobacter arcticus (strain DSM 17307 / VKM B-2377 / 273-4).